Reading from the N-terminus, the 66-residue chain is Large ribosomal subunit protein bL35 (66 aa).

Residues 1 to 16 are compositionally biased toward basic residues; the sequence is MPKQKTHRASAKRFKR. Positions 1 to 20 are disordered; that stretch reads MPKQKTHRASAKRFKRTGSG.

Belongs to the bacterial ribosomal protein bL35 family.

The polypeptide is Large ribosomal subunit protein bL35 (Streptococcus thermophilus (strain ATCC BAA-250 / LMG 18311)).